Here is a 1399-residue protein sequence, read N- to C-terminus: Dicer-like protein 2 (1399 aa).

The region spanning 18-194 (MVEESMQSNI…EDLQQIERNL (177 aa)) is the Helicase ATP-binding domain. 31–38 (MDTGSGKT) contributes to the ATP binding site. The DEAH box signature appears at 139-142 (DEAH). The region spanning 364 to 549 (KLQLLIKFLV…QSETGHRNFE (186 aa)) is the Helicase C-terminal domain. The region spanning 562 to 656 (ASQHLHHFCS…LPARQEADDE (95 aa)) is the Dicer dsRNA-binding fold domain. RNase III domains are found at residues 897–1054 (LPSI…TVGG) and 1094–1270 (LDVL…IDSL). Mg(2+) contacts are provided by E1133, D1256, and E1259. The DRBM domain maps to 1301–1370 (HPKERLGHLA…AWKAVGVLES (70 aa)).

It belongs to the helicase family. Dicer subfamily. Requires Mg(2+) as cofactor. It depends on Mn(2+) as a cofactor.

Its function is as follows. Dicer-like endonuclease involved in cleaving double-stranded RNA in the RNA interference (RNAi) pathway. Produces 21 to 25 bp dsRNAs (siRNAs) which target the selective destruction of homologous RNAs leading to sequence-specific suppression of gene expression, called post-transcriptional gene silencing (PTGS). Part of a broad host defense response against viral infection and transposons. The sequence is that of Dicer-like protein 2 (DCL2) from Phaeosphaeria nodorum (strain SN15 / ATCC MYA-4574 / FGSC 10173) (Glume blotch fungus).